The sequence spans 220 residues: MRAVDIHKSYSQGVGELEILRGVSLDIREGEAFAILGASGAGKSTLLQIMGTLDRPNKGELYCEGRDLLAMSDDELSRFRNSEMGFVFQFHHLLSEFNALENVMIPCRVGGESIKVAKEKALHLLEFMGLADRRDHHPNQLSGGELQRVAIARALVRHPKILFADEPTGNLDSHTSGKIQELFFRLKEEMKLALVIVTHDLTFATRFPKVYRMKDGQWQS.

The ABC transporter domain occupies 1 to 220 (MRAVDIHKSY…YRMKDGQWQS (220 aa)). 37–44 (GASGAGKS) lines the ATP pocket.

This sequence belongs to the ABC transporter superfamily. Lipoprotein translocase (TC 3.A.1.125) family. As to quaternary structure, the complex is composed of two ATP-binding proteins (LolD) and two transmembrane proteins (LolC and LolE).

The protein localises to the cell inner membrane. Functionally, part of the ABC transporter complex LolCDE involved in the translocation of mature outer membrane-directed lipoproteins, from the inner membrane to the periplasmic chaperone, LolA. Responsible for the formation of the LolA-lipoprotein complex in an ATP-dependent manner. The sequence is that of Lipoprotein-releasing system ATP-binding protein LolD from Bdellovibrio bacteriovorus (strain ATCC 15356 / DSM 50701 / NCIMB 9529 / HD100).